We begin with the raw amino-acid sequence, 124 residues long: uncharacterized protein (124 aa).

The segment at 44–92 (DRVENSGNGTGSISAPLTDLGPSIGDSHENKGADIPIHPPLDTQSHAKD) is disordered. The segment covering 48–58 (NSGNGTGSISA) has biased composition (polar residues).

This is an uncharacterized protein from Caenorhabditis elegans.